Consider the following 429-residue polypeptide: Glutamyl-tRNA reductase (429 aa).

Substrate-binding positions include 49 to 52 (TCNR), Ser-107, 112 to 114 (EPQ), and Gln-118. The active-site Nucleophile is the Cys-50. 187–192 (GAGETI) serves as a coordination point for NADP(+).

This sequence belongs to the glutamyl-tRNA reductase family. Homodimer.

The enzyme catalyses (S)-4-amino-5-oxopentanoate + tRNA(Glu) + NADP(+) = L-glutamyl-tRNA(Glu) + NADPH + H(+). It participates in porphyrin-containing compound metabolism; protoporphyrin-IX biosynthesis; 5-aminolevulinate from L-glutamyl-tRNA(Glu): step 1/2. Catalyzes the NADPH-dependent reduction of glutamyl-tRNA(Glu) to glutamate 1-semialdehyde (GSA). The protein is Glutamyl-tRNA reductase of Pseudomonas fluorescens (strain SBW25).